The chain runs to 89 residues: Small ribosomal subunit protein uS15 (89 aa).

It belongs to the universal ribosomal protein uS15 family. As to quaternary structure, part of the 30S ribosomal subunit. Forms a bridge to the 50S subunit in the 70S ribosome, contacting the 23S rRNA.

One of the primary rRNA binding proteins, it binds directly to 16S rRNA where it helps nucleate assembly of the platform of the 30S subunit by binding and bridging several RNA helices of the 16S rRNA. Its function is as follows. Forms an intersubunit bridge (bridge B4) with the 23S rRNA of the 50S subunit in the ribosome. This is Small ribosomal subunit protein uS15 from Shouchella clausii (strain KSM-K16) (Alkalihalobacillus clausii).